The primary structure comprises 483 residues: UDP-N-acetylmuramoyl-L-alanyl-D-glutamate--2,6-diaminopimelate ligase (483 aa).

Position 29 (Ser29) interacts with UDP-N-acetyl-alpha-D-muramoyl-L-alanyl-D-glutamate. 112 to 118 (GTNGKTT) lines the ATP pocket. UDP-N-acetyl-alpha-D-muramoyl-L-alanyl-D-glutamate contacts are provided by residues 154–155 (TT), Ser181, and Arg189. An N6-carboxylysine modification is found at Lys221. Residues Arg380, 404–407 (DNPR), Gly454, and Glu458 each bind meso-2,6-diaminopimelate. The Meso-diaminopimelate recognition motif signature appears at 404-407 (DNPR).

Belongs to the MurCDEF family. MurE subfamily. Mg(2+) serves as cofactor. Carboxylation is probably crucial for Mg(2+) binding and, consequently, for the gamma-phosphate positioning of ATP.

It localises to the cytoplasm. It carries out the reaction UDP-N-acetyl-alpha-D-muramoyl-L-alanyl-D-glutamate + meso-2,6-diaminopimelate + ATP = UDP-N-acetyl-alpha-D-muramoyl-L-alanyl-gamma-D-glutamyl-meso-2,6-diaminopimelate + ADP + phosphate + H(+). It functions in the pathway cell wall biogenesis; peptidoglycan biosynthesis. Its function is as follows. Catalyzes the addition of meso-diaminopimelic acid to the nucleotide precursor UDP-N-acetylmuramoyl-L-alanyl-D-glutamate (UMAG) in the biosynthesis of bacterial cell-wall peptidoglycan. The polypeptide is UDP-N-acetylmuramoyl-L-alanyl-D-glutamate--2,6-diaminopimelate ligase (Clostridium botulinum (strain ATCC 19397 / Type A)).